The primary structure comprises 208 residues: uncharacterized protein (208 aa).

A disordered region spans residues 124–208 (KKTGSSNART…PSFGKYSSLA (85 aa)). The span at 133-170 (TPDEGKKAKNAPEEEKVKTSGSEDAKGEESAVEGKEPE) shows a compositional bias: basic and acidic residues.

The protein resides in the golgi apparatus. This is an uncharacterized protein from Encephalitozoon cuniculi (strain GB-M1) (Microsporidian parasite).